We begin with the raw amino-acid sequence, 148 residues long: MNNKFKDFFGFGDNDSYEERDAYEEHYDEQEEMQNSNRPTNSRDSNVVSIKAGQAGSGPSKIVLYEPRVYSDAKEVAQNLLNQRAIIINFSRMDDASARRVVDFITGTVYALNGEIQRIGDKIFLATPPKFETDGKITELLDKKDTLG.

Residues 1–59 (MNNKFKDFFGFGDNDSYEERDAYEEHYDEQEEMQNSNRPTNSRDSNVVSIKAGQAGSGP) are disordered. The span at 33–48 (MQNSNRPTNSRDSNVV) shows a compositional bias: polar residues.

This sequence belongs to the SepF family. In terms of assembly, homodimer. Interacts with FtsZ.

It is found in the cytoplasm. In terms of biological role, cell division protein that is part of the divisome complex and is recruited early to the Z-ring. Probably stimulates Z-ring formation, perhaps through the cross-linking of FtsZ protofilaments. Its function overlaps with FtsA. This chain is Cell division protein SepF, found in Lactobacillus delbrueckii subsp. bulgaricus (strain ATCC BAA-365 / Lb-18).